A 658-amino-acid chain; its full sequence is Threonine--tRNA ligase (658 aa).

The TGS domain occupies 1-61; the sequence is MSDVRVIIQR…KDGETVEAVE (61 aa). The segment at 259–554 is catalytic; that stretch reads DHRKLGSELD…LLEHYAGAMP (296 aa). Zn(2+)-binding residues include Cys-353, His-404, and His-531.

It belongs to the class-II aminoacyl-tRNA synthetase family. In terms of assembly, homodimer. Zn(2+) is required as a cofactor.

The protein resides in the cytoplasm. It carries out the reaction tRNA(Thr) + L-threonine + ATP = L-threonyl-tRNA(Thr) + AMP + diphosphate + H(+). Its function is as follows. Catalyzes the attachment of threonine to tRNA(Thr) in a two-step reaction: L-threonine is first activated by ATP to form Thr-AMP and then transferred to the acceptor end of tRNA(Thr). Also edits incorrectly charged L-seryl-tRNA(Thr). The sequence is that of Threonine--tRNA ligase from Streptomyces coelicolor (strain ATCC BAA-471 / A3(2) / M145).